Here is a 78-residue protein sequence, read N- to C-terminus: uncharacterized protein (78 aa).

Residues 1 to 27 (MQNSKTDMCAALWAVTGLVLNVAVRFA) form the signal peptide.

This is an uncharacterized protein from Dryophytes versicolor (chameleon treefrog).